A 205-amino-acid polypeptide reads, in one-letter code: Thymidylate kinase (205 aa).

11 to 18 (GPEGSGKT) is an ATP binding site.

This sequence belongs to the thymidylate kinase family.

It catalyses the reaction dTMP + ATP = dTDP + ADP. Functionally, phosphorylation of dTMP to form dTDP in both de novo and salvage pathways of dTTP synthesis. The protein is Thymidylate kinase of Clostridium novyi (strain NT).